Reading from the N-terminus, the 3131-residue chain is Intermembrane lipid transfer protein vps1302 (3131 aa).

The Chorein N-terminal domain occupies 2-115; the sequence is LEGLLANFLN…VLESKRRQMQ (114 aa). The span at 774–801 shows a compositional bias: basic and acidic residues; sequence DGKASDDDDNGDWRPESSESLDSHESEY. The interval 774-807 is disordered; it reads DGKASDDDDNGDWRPESSESLDSHESEYKLNNTP. The 279-residue stretch at 2085–2363 folds into the SHR-BD domain; the sequence is KVMIYPPYVI…NYSWDFPILK (279 aa).

It belongs to the VPS13 family.

It is found in the golgi apparatus. The protein resides in the trans-Golgi network. Mediates the transfer of lipids between membranes at organelle contact sites. May play a role in mitochondrial lipid homeostasis, Golgi vesicle transport, reticulophagy, actin cytoskeleton organization and formation of the forespore membrane. This Schizosaccharomyces pombe (strain 972 / ATCC 24843) (Fission yeast) protein is Intermembrane lipid transfer protein vps1302.